Here is a 1211-residue protein sequence, read N- to C-terminus: DNA polymerase beta (1211 aa).

Tandem repeats lie at residues 1074-1077, 1078-1081, 1082-1085, and 1086-1089. The tract at residues 1074 to 1089 is 4 X 4 AA tandem repeats of [NK]-[P]-A-G; that stretch reads KPAGKPAGNPAGNPAG.

It belongs to the DNA polymerase type-B family.

It catalyses the reaction DNA(n) + a 2'-deoxyribonucleoside 5'-triphosphate = DNA(n+1) + diphosphate. In terms of biological role, DNA-directed DNA polymerase involved in viral DNA replication. The protein is DNA polymerase beta (DPOL) of African swine fever virus (strain Badajoz 1971 Vero-adapted) (Ba71V).